Consider the following 811-residue polypeptide: DNA mismatch repair protein MutS (811 aa).

595–602 (GPNMSGKS) contributes to the ATP binding site.

The protein belongs to the DNA mismatch repair MutS family.

This protein is involved in the repair of mismatches in DNA. It is possible that it carries out the mismatch recognition step. This protein has a weak ATPase activity. The protein is DNA mismatch repair protein MutS of Pseudothermotoga lettingae (strain ATCC BAA-301 / DSM 14385 / NBRC 107922 / TMO) (Thermotoga lettingae).